A 450-amino-acid chain; its full sequence is Protein W (450 aa).

Positions 53–92 (SGESEQVEGGMSKDDGDVERRNLEDLSSTSPTDGTIGKRV) are disordered. A compositionally biased stretch (basic and acidic residues) spans 63 to 76 (MSKDDGDVERRNLE). Residue Ser257 is modified to Phosphoserine; by host. The disordered stretch occupies residues 265-324 (ISPEDEEPSSVGGKPNESIGRTIEGQSIRDNLQAKDNKSTDVPGAGPKDSAVKEEPPQKR). The residue at position 350 (Ser350) is a Phosphoserine; by host. Disordered stretches follow at residues 384–403 (VQTADRQRPGTPMPKSRGIP) and 429–450 (PGMFEDHPPTKKARVSMRRMSN). The span at 438–450 (TKKARVSMRRMSN) shows a compositional bias: basic residues. A Nuclear localization signal motif is present at residues 439-442 (KKAR).

Interacts with host STAT1.

It localises to the host nucleus. Prevent the establishment of cellular antiviral state by blocking the interferon-alpha/beta (IFN-alpha/beta). Interacts with host STAT1 protein in the nucleus, blocking it's phosphorylation by IFN-alpha/beta. Also blocks antiviral state induced by Toll-like receptor 3/TLR3 binding to dsRNA. The polypeptide is Protein W (P/V/C) (Cynopterus brachyotis (Lesser short-nosed fruit bat)).